The primary structure comprises 610 residues: Elongation factor 4 (610 aa).

The 183-residue stretch at 12–194 folds into the tr-type G domain; sequence EKIRNFSIIA…QIVEKVPAPQ (183 aa). GTP contacts are provided by residues 24–29 and 141–144; these read DHGKST and NKID.

This sequence belongs to the TRAFAC class translation factor GTPase superfamily. Classic translation factor GTPase family. LepA subfamily.

The protein localises to the cell membrane. The enzyme catalyses GTP + H2O = GDP + phosphate + H(+). In terms of biological role, required for accurate and efficient protein synthesis under certain stress conditions. May act as a fidelity factor of the translation reaction, by catalyzing a one-codon backward translocation of tRNAs on improperly translocated ribosomes. Back-translocation proceeds from a post-translocation (POST) complex to a pre-translocation (PRE) complex, thus giving elongation factor G a second chance to translocate the tRNAs correctly. Binds to ribosomes in a GTP-dependent manner. The protein is Elongation factor 4 of Streptococcus thermophilus (strain CNRZ 1066).